The following is a 600-amino-acid chain: MTKEKLENELKTLPNSAGVYEYFNQEGKLLYVGKAKNLKNRVKSYFAFTPNLHANPGNSLRIQKMIQETVHLEFITTNSEADALILENSFIKQLHPKYNILLRDDKTYPYIYVDFKEEFPRFEITRKLVKKSKIKYFGPFFKGARELLDALYLYYPLKQKASCKSPCIFYQISRCLAPCDKRISKEKYREILDEAMHALLNPSVLLKNLEKQMLVLAQNENYEEAAKIRDQIATIKDLEVKVEIDIAKLEDFEVFALAFKNSMLSTLRFVVQNGKIISVNSKITPIKNDIQWDKNEIYKQLILENFSMDIPLLASVIYVYEEFEDRMLLEKILSQRFDKKISIKIPKIGEKRKICDLAFQNALLNIEKEQKNHDFTIQKELKSYFELENLPNDIEIFDNSHLQGVANVGAMVTYSVNSWDKSKYRKFHLKHKNDYDQMREVLTRRALDFDKIPPPDLWLIDGGKVLLDLAKEIILSTGANVDILAISKEKIDAKAHRAKGGAKDKIHSLKGEFSLSVNDKKLQFLQKLRDEAHRFAISFHQNTKKKQDLKSSKLANLGLSLGVIQKLLAYYGNFESIYKADFKDLAMLVGKKAAQKIKEN.

The 86-residue stretch at 15 to 100 folds into the GIY-YIG domain; that stretch reads NSAGVYEYFN…IKQLHPKYNI (86 aa). The region spanning 203 to 238 is the UVR domain; that stretch reads SVLLKNLEKQMLVLAQNENYEEAAKIRDQIATIKDL.

This sequence belongs to the UvrC family. Interacts with UvrB in an incision complex.

The protein localises to the cytoplasm. In terms of biological role, the UvrABC repair system catalyzes the recognition and processing of DNA lesions. UvrC both incises the 5' and 3' sides of the lesion. The N-terminal half is responsible for the 3' incision and the C-terminal half is responsible for the 5' incision. The polypeptide is UvrABC system protein C (Campylobacter jejuni subsp. doylei (strain ATCC BAA-1458 / RM4099 / 269.97)).